The following is a 145-amino-acid chain: RNA polymerase-binding transcription factor DksA (145 aa).

Residues Cys108, Cys111, Cys129, and Cys132 each coordinate Zn(2+). The dksA C4-type zinc-finger motif lies at 108–132 (CDCCGEEIGIRRLEARPTADLCIDC).

This sequence belongs to the DksA family. Interacts directly with the RNA polymerase.

The protein localises to the cytoplasm. Its function is as follows. Transcription factor that acts by binding directly to the RNA polymerase (RNAP). Required for negative regulation of rRNA expression and positive regulation of several amino acid biosynthesis promoters. Also required for regulation of fis expression. This is RNA polymerase-binding transcription factor DksA from Haemophilus influenzae (strain ATCC 51907 / DSM 11121 / KW20 / Rd).